Reading from the N-terminus, the 741-residue chain is Eukaryotic translation initiation factor 3 subunit B (741 aa).

The span at 1 to 10 (MAPSFDTLSE) shows a compositional bias: polar residues. Residues 1–22 (MAPSFDTLSEQDLHEEEEEEID) form a disordered region. Acidic residues predominate over residues 13 to 22 (LHEEEEEEID). An RRM domain is found at 40–126 (TFVVIDGLPV…HTLLVNKLMD (87 aa)). WD repeat units follow at residues 193 to 230 (AHWT…KQKQ), 232 to 289 (PHPF…RSFV), 303 to 344 (QPKK…LLGK), 514 to 557 (IEKK…EKPE), and 572 to 610 (LEHY…HTFS). The segment at 695–722 (KDAYGLPEDVDDPKKAKDAPAVTSEQGE) is disordered.

The protein belongs to the eIF-3 subunit B family. In terms of assembly, component of the eukaryotic translation initiation factor 3 (eIF-3) complex.

Its subcellular location is the cytoplasm. Its function is as follows. RNA-binding component of the eukaryotic translation initiation factor 3 (eIF-3) complex, which is involved in protein synthesis of a specialized repertoire of mRNAs and, together with other initiation factors, stimulates binding of mRNA and methionyl-tRNAi to the 40S ribosome. The eIF-3 complex specifically targets and initiates translation of a subset of mRNAs involved in cell proliferation. In Aspergillus clavatus (strain ATCC 1007 / CBS 513.65 / DSM 816 / NCTC 3887 / NRRL 1 / QM 1276 / 107), this protein is Eukaryotic translation initiation factor 3 subunit B (prt1).